The chain runs to 209 residues: MGSVSNQQFAGGCAKAAEEAPEEAPEDAARAADEPQLLHGAGICKWFNVRMGFGFLSMTARAGVALDPPVDVFVHQSKLHMEGFRSLKEGEAVEFTFKKSAKGLESIRVTGPGGVFCIGSERRPKGKSMQKRRSKGDRCYNCGGLDHHAKECKLPPQPKKCHFCQSISHMVASCPLKAQQGPSAQGKPTYFREEEEEIHSPTLLPEAQN.

A disordered region spans residues Met-1 to Ala-31. Gly-2 is modified (N-acetylglycine). At Ser-3 the chain carries Phosphoserine. A CSD domain is found at His-39–Pro-112. The flexible linker stretch occupies residues Gly-113–Gly-136. Phosphoserine is present on Ser-120. 2 CCHC-type zinc fingers span residues Asp-137 to Leu-154 and Lys-159 to Leu-176. The interval Ala-178–Asn-209 is disordered. The residue at position 200 (Ser-200) is a Phosphoserine.

The protein belongs to the lin-28 family. In terms of assembly, monomer. During skeletal muscle differentiation, associated with translation initiation complexes in the polysomal compartment. Directly interacts with EIF3S2. Interacts with NCL in an RNA-dependent manner. Interacts (via C-terminus) with DHX9 (via N- and C-terminus); this interaction occurs in a RNA-independent manner. Interacts with TUT4 in the presence of pre-let-7 RNA. Expressed in embryonic stem cells, placenta and testis. Tends to be up-regulated in HER2-overexpressing breast tumors.

It localises to the cytoplasm. It is found in the rough endoplasmic reticulum. The protein localises to the P-body. Its subcellular location is the stress granule. The protein resides in the nucleus. It localises to the nucleolus. Functionally, RNA-binding protein that inhibits processing of pre-let-7 miRNAs and regulates translation of mRNAs that control developmental timing, pluripotency and metabolism. Seems to recognize a common structural G-quartet (G4) feature in its miRNA and mRNA targets. 'Translational enhancer' that drives specific mRNAs to polysomes and increases the efficiency of protein synthesis. Its association with the translational machinery and target mRNAs results in an increased number of initiation events per molecule of mRNA and, indirectly, in mRNA stabilization. Binds IGF2 mRNA, MYOD1 mRNA, ARBP/36B4 ribosomal protein mRNA and its own mRNA. Essential for skeletal muscle differentiation program through the translational up-regulation of IGF2 expression. Suppressor of microRNA (miRNA) biogenesis, including that of let-7, miR107, miR-143 and miR-200c. Specifically binds the miRNA precursors (pre-miRNAs), recognizing an 5'-GGAG-3' motif found in pre-miRNA terminal loop, and recruits TUT4 and TUT7 uridylyltransferases. This results in the terminal uridylation of target pre-miRNAs. Uridylated pre-miRNAs fail to be processed by Dicer and undergo degradation. The repression of let-7 expression is required for normal development and contributes to maintain the pluripotent state by preventing let-7-mediated differentiation of embryonic stem cells. Localized to the periendoplasmic reticulum area, binds to a large number of spliced mRNAs and inhibits the translation of mRNAs destined for the ER, reducing the synthesis of transmembrane proteins, ER or Golgi lumen proteins, and secretory proteins. Binds to and enhances the translation of mRNAs for several metabolic enzymes, such as PFKP, PDHA1 or SDHA, increasing glycolysis and oxidative phosphorylation. Which, with the let-7 repression may enhance tissue repair in adult tissue. The polypeptide is Protein lin-28 homolog A (LIN28A) (Homo sapiens (Human)).